Here is a 172-residue protein sequence, read N- to C-terminus: Acidic proline-rich protein PRP25 (172 aa).

Positions 1 to 16 are cleaved as a signal peptide; that stretch reads MLVVLFTAVLLTLSYA. The tract at residues 22 to 172 is disordered; that stretch reads ELQILDQTPN…QQGPPPPGGP (151 aa). The span at 32 to 44 shows a compositional bias: pro residues; that stretch reads QKPPPPGFPPRPP. Low complexity predominate over residues 57–67; the sequence is GPQQSPLQPGK. Pro residues-rich tracts occupy residues 68-137 and 145-172; these read PQDP…PQQK and QGPPPPGGPQQKPPQPGNQQGPPPPGGP.

It is found in the secreted. This chain is Acidic proline-rich protein PRP25, found in Rattus norvegicus (Rat).